Consider the following 296-residue polypeptide: MTDAEVIPLTKGLAALQTALPFIVGCGSGMVATTCVQPIDTIKVRLQLADRSVLRVTTWSIARDLMVEGGILNMYQGLSAAIMRSLVYGTMRLGLFSTFEKELARRARERGTTLSFGERSLAGVGAGALAAVVGNPTEVILIRMQTDGLKPLSQQARYSSAVDALRRIASHEGVLALWKGAGPTLIRAMSINFGQLTSFSEAKNQLQEHTSLSPPVRTAVAAGIAGCLGALISQPFDFVKTRLQNQVKTSPTVGLGSGELLYKGTFDCLFKVIHKEGLFRLYRDILPYFMRIGPHS.

Helical transmembrane passes span glycine 12 to alanine 32, alanine 122 to isoleucine 142, and alanine 219 to valine 239. Solcar repeat units lie at residues leucine 16–glutamate 102, leucine 114–glutamine 205, and serine 213–serine 296.

Belongs to the mitochondrial carrier (TC 2.A.29) family.

It localises to the mitochondrion inner membrane. Functionally, solute carrier protein; part of the Fusarium detoxification of benzoxazolinone cluster involved in the degradation of benzoxazolinones produced by the host plant. Maize, wheat, and rye produce the 2 benzoxazinone phytoanticipins 2,4-dihy-droxy-7-methoxy-1,4-benzoxazin-3-one (DIMBOA) and 2,4-dihydroxy-1,4-benzoxazin-3-one (DIBOA) that, due to their inherent instability once released, spontaneously degrade to the more stable corresponding benzoxazolinones, 6-methoxy-2-benzoxazolinone (MBOA) and 2-benzoxazolinone (BOA), respectively. In Fusarium pseudograminearum (strain CS3096) (Wheat and barley crown-rot fungus), this protein is Solute carrier protein FPSE_08119.